Consider the following 229-residue polypeptide: Protein N-lysine methyltransferase METTL21D (229 aa).

N-acetylalanine is present on Ala-2. Position 8 is a phosphoserine (Ser-8). S-adenosyl-L-methionine-binding positions include Trp-43, 75–77, Asp-96, Trp-126, Ala-143, and Tyr-148; that span reads GSG.

This sequence belongs to the methyltransferase superfamily. METTL21 family. Interacts with ALKBH6. Interacts with ASPSCR1 and UBXN6; interaction with ASPSCR1, but not with UBXN6, enhances VCP methylation.

The protein resides in the cytoplasm. The enzyme catalyses L-lysyl-[protein] + 3 S-adenosyl-L-methionine = N(6),N(6),N(6)-trimethyl-L-lysyl-[protein] + 3 S-adenosyl-L-homocysteine + 3 H(+). Its function is as follows. Protein N-lysine methyltransferase that specifically trimethylates 'Lys-315' of VCP/p97; this modification may decrease VCP ATPase activity. The sequence is that of Protein N-lysine methyltransferase METTL21D (VCPKMT) from Homo sapiens (Human).